Reading from the N-terminus, the 459-residue chain is LRSDFLLGPERYNKLIRPAVNKSQQVTIGIKVSLAQLISVNEREQIMTTNVWLTQEWTDYRLVWDPNEYEGIKKLRIPSQHIWLPDIVLYNNADGVYEVSFYCNAVVSNTGDIFWLPPAIYKSACAIEVRNFPFDQQNCTLKFRSWTYDRTELDLVLTSDFASRDDYTPSGEWDIVSLPGRKNEDPNDLTYLDITYDFVIKRKPLFYTINLIIPCVLITSLAILVFYLPSDCGEKVTLCMSVLLALTVFLLLISKIVPPTSLAVPLIGKYLMFTMVLVTFSIVTSVCVLNVHHRSPSTHYMPEWVKCVFLHKLPAFLLMRRPGRSNVRERFRRKHQRKSFSSHQDGDSFFLTDDPGRVCGAWRVGDLPEGSEFRQRVKVRHDQDVDEAIDGVRFIAEHMKIEDDDEGIIEDWKYVAMVIDRLFLWIFILVCVVGTLGLFVQPLFQSYNTPVAEEVYGDF.

The Extracellular segment spans residues 1–203 (LRSDFLLGPE…ITYDFVIKRK (203 aa)). Residues Asn21 and Asn138 are each glycosylated (N-linked (GlcNAc...) asparagine). Residues Cys125 and Cys139 are joined by a disulfide bond. The chain crosses the membrane as a helical span at residues 204 to 228 (PLFYTINLIIPCVLITSLAILVFYL). The Cytoplasmic portion of the chain corresponds to 229-235 (PSDCGEK). The chain crosses the membrane as a helical span at residues 236-254 (VTLCMSVLLALTVFLLLIS). The Extracellular segment spans residues 255–269 (KIVPPTSLAVPLIGK). Residues 270–291 (YLMFTMVLVTFSIVTSVCVLNV) traverse the membrane as a helical segment. At 292–421 (HHRSPSTHYM…WKYVAMVIDR (130 aa)) the chain is on the cytoplasmic side. Residues 422-440 (LFLWIFILVCVVGTLGLFV) form a helical membrane-spanning segment.

The protein belongs to the ligand-gated ion channel (TC 1.A.9) family. Acetylcholine receptor (TC 1.A.9.1) subfamily. Beta-2/CHRNB2 sub-subfamily. Neuronal AChR is a heteropentamer composed of two different types of subunits: alpha and beta. CHRNB2/Beta-2 subunit can be combined to CHRNA2/alpha-2, CHRNA3/alpha-3 or CHRNA4/alpha-4, CHRNA5/alpha-5, CHRNA6/alpha-6 and CHRNB3/beta-3 to give rise to functional receptors.

The protein resides in the synaptic cell membrane. Its subcellular location is the cell membrane. The enzyme catalyses Ca(2+)(in) = Ca(2+)(out). The catalysed reaction is K(+)(in) = K(+)(out). It catalyses the reaction Na(+)(in) = Na(+)(out). With respect to regulation, activated by a myriad of ligands such as acetylcholine, cytisine, nicotine, choline and epibatidine. nAChR activity is inhibited by the antagonist alpha-conotoxins BuIA, PnIA, PnIC, GID and MII, small disulfide-constrained peptides from cone snails. Its function is as follows. Component of neuronal acetylcholine receptors (nAChRs) that function as pentameric, ligand-gated cation channels with high calcium permeability among other activities. nAChRs are excitatory neurotrasnmitter receptors formed by a collection of nAChR subunits known to mediate synaptic transmission in the nervous system and the neuromuscular junction. Each nAchR subunit confers differential attributes to channel properties, including activation, deactivation and desensitization kinetics, pH sensitivity, cation permeability, and binding to allosteric modulators. CHRNB2 forms heteropentameric neuronal acetylcholine receptors with CHRNA2, CHRNA3, CHRNA4 and CHRNA6, as well as CHRNA5 and CHRNB3 as accesory subunits. This Carassius auratus (Goldfish) protein is Neuronal acetylcholine receptor subunit beta-2 (chrnb2).